The sequence spans 221 residues: Protein Thf1 (221 aa).

The stretch at 174 to 213 (TKERVEKDVNLYKSSLDKIEKALELIEMNIKDEKRRNKER) forms a coiled coil.

Belongs to the THF1 family.

May be involved in photosynthetic membrane biogenesis. The polypeptide is Protein Thf1 (Prochlorococcus marinus (strain MIT 9211)).